The following is an 85-amino-acid chain: Cytochrome c2 (85 aa).

Heme c-binding residues include Cys12, Cys15, His16, and Met61.

The protein belongs to the cytochrome c family. In terms of processing, binds 1 heme c group covalently per subunit.

Its function is as follows. Cytochrome c2 is found mainly in purple, non-sulfur, photosynthetic bacteria where it functions as the electron donor to the oxidized bacteriochlorophyll in the photophosphorylation pathway. However, it may also have a role in the respiratory chain and is found in some non-photosynthetic bacteria. The polypeptide is Cytochrome c2 (Rubrivivax gelatinosus (Rhodocyclus gelatinosus)).